The primary structure comprises 536 residues: CTP synthase (536 aa).

The interval 1 to 267 is amidoligase domain; the sequence is MTKFIFVTGG…DDIVIKRLEL (267 aa). Residue Ser-13 coordinates CTP. Residue Ser-13 participates in UTP binding. 14–19 lines the ATP pocket; the sequence is SLGKGI. Residue Tyr-54 coordinates L-glutamine. Asp-71 contributes to the ATP binding site. The Mg(2+) site is built by Asp-71 and Glu-141. CTP-binding positions include 148–150, 188–193, and Lys-224; these read DIE and KTKPTQ. Residues 188–193 and Lys-224 contribute to the UTP site; that span reads KTKPTQ. ATP is bound at residue 240-242; that stretch reads RDA. One can recognise a Glutamine amidotransferase type-1 domain in the interval 293-535; that stretch reads TIGLVGKYVS…IEASLNHQQS (243 aa). Position 355 (Gly-355) interacts with L-glutamine. The Nucleophile; for glutamine hydrolysis role is filled by Cys-382. L-glutamine is bound by residues 383–386, Glu-406, and Arg-463; that span reads LGMQ. Residues His-508 and Glu-510 contribute to the active site.

The protein belongs to the CTP synthase family. In terms of assembly, homotetramer.

It carries out the reaction UTP + L-glutamine + ATP + H2O = CTP + L-glutamate + ADP + phosphate + 2 H(+). The enzyme catalyses L-glutamine + H2O = L-glutamate + NH4(+). It catalyses the reaction UTP + NH4(+) + ATP = CTP + ADP + phosphate + 2 H(+). It functions in the pathway pyrimidine metabolism; CTP biosynthesis via de novo pathway; CTP from UDP: step 2/2. Its activity is regulated as follows. Allosterically activated by GTP, when glutamine is the substrate; GTP has no effect on the reaction when ammonia is the substrate. The allosteric effector GTP functions by stabilizing the protein conformation that binds the tetrahedral intermediate(s) formed during glutamine hydrolysis. Inhibited by the product CTP, via allosteric rather than competitive inhibition. In terms of biological role, catalyzes the ATP-dependent amination of UTP to CTP with either L-glutamine or ammonia as the source of nitrogen. Regulates intracellular CTP levels through interactions with the four ribonucleotide triphosphates. In Staphylococcus saprophyticus subsp. saprophyticus (strain ATCC 15305 / DSM 20229 / NCIMB 8711 / NCTC 7292 / S-41), this protein is CTP synthase.